We begin with the raw amino-acid sequence, 190 residues long: Putative triphosphatase YjbK (190 aa).

The CYTH domain maps to 4–189 (EIEIEFKNML…LRFYEEKRKS (186 aa)).

This Bacillus subtilis (strain 168) protein is Putative triphosphatase YjbK (yjbK).